Here is an 85-residue protein sequence, read N- to C-terminus: Large ribosomal subunit protein bL27 (85 aa).

The tract at residues 1–22 (MAHKKAGGSTRNGRDSESKRLG) is disordered.

It belongs to the bacterial ribosomal protein bL27 family.

The polypeptide is Large ribosomal subunit protein bL27 (Vibrio parahaemolyticus serotype O3:K6 (strain RIMD 2210633)).